Here is an 853-residue protein sequence, read N- to C-terminus: DNA mismatch repair protein MutS (853 aa).

614 to 621 serves as a coordination point for ATP; sequence GPNMGGKS.

It belongs to the DNA mismatch repair MutS family.

In terms of biological role, this protein is involved in the repair of mismatches in DNA. It is possible that it carries out the mismatch recognition step. This protein has a weak ATPase activity. In Escherichia fergusonii (strain ATCC 35469 / DSM 13698 / CCUG 18766 / IAM 14443 / JCM 21226 / LMG 7866 / NBRC 102419 / NCTC 12128 / CDC 0568-73), this protein is DNA mismatch repair protein MutS.